Reading from the N-terminus, the 61-residue chain is Large ribosomal subunit protein bL32 (61 aa).

The segment at 1–44 is disordered; the sequence is MAVQQNRKSRSRRDMRRSHDALTENALTVDQATGETHRRHHVTK. Over residues 7-16 the composition is skewed to basic residues; it reads RKSRSRRDMR. Over residues 25–34 the composition is skewed to polar residues; sequence NALTVDQATG.

This sequence belongs to the bacterial ribosomal protein bL32 family.

In Acinetobacter baumannii (strain AB307-0294), this protein is Large ribosomal subunit protein bL32.